The primary structure comprises 786 residues: Protein SEY1 (786 aa).

Residues 1–684 (MSDLKEAIQL…KRSIVNTTER (684 aa)) are Cytoplasmic-facing. One can recognise a GB1/RHD3-type G domain in the interval 35-262 (GVKYHVISVF…QDASFFKDEY (228 aa)). 45 to 52 (GSQSSGKS) is a binding site for GTP. Positions 355–375 (KKVYEERRDDLIKQLNTIIDE) form a coiled coil. Residues 685 to 705 (IPLYMYALVVALGWGRIITIL) form a helical membrane-spanning segment. Residues 706–708 (RNP) lie on the Lumenal side of the membrane. A helical membrane pass occupies residues 709 to 729 (ATIILSIIVLAGAYFVHKLNL). Residues 730-786 (WGPLLQFANQATGQATAVLKQTVRSLVVDEEPKRKILVEPHESEGVDKEPSKNDQHL) are Cytoplasmic-facing. The disordered stretch occupies residues 765-786 (ILVEPHESEGVDKEPSKNDQHL).

The protein belongs to the TRAFAC class dynamin-like GTPase superfamily. GB1/RHD3 GTPase family. RHD3 subfamily.

It is found in the endoplasmic reticulum membrane. Its function is as follows. Cooperates with the reticulon proteins and tubule-shaping DP1 family proteins to generate and maintain the structure of the tubular endoplasmic reticulum network. Has GTPase activity, which is required for its function in ER organization. The polypeptide is Protein SEY1 (Kluyveromyces lactis (strain ATCC 8585 / CBS 2359 / DSM 70799 / NBRC 1267 / NRRL Y-1140 / WM37) (Yeast)).